Here is a 283-residue protein sequence, read N- to C-terminus: Quinate/shikimate dehydrogenase (NAD(+)) (283 aa).

Residues Ser17, Thr69, Lys73, Asn94, and Asp110 each coordinate shikimate. L-quinate is bound by residues 17-19 (SRT), Thr69, Lys73, Asn94, and Asp110. The Proton acceptor role is filled by Lys73. Residues 137–138 (GV), Asp158, Arg163, 203–206 (PMGM), Ala213, Val228, and Gly251 contribute to the NAD(+) site. A shikimate-binding site is contributed by Gln258. Gln258 contacts L-quinate.

It belongs to the shikimate dehydrogenase family. Homodimer.

It catalyses the reaction L-quinate + NAD(+) = 3-dehydroquinate + NADH + H(+). It carries out the reaction shikimate + NAD(+) = 3-dehydroshikimate + NADH + H(+). Its pathway is metabolic intermediate biosynthesis; chorismate biosynthesis; chorismate from D-erythrose 4-phosphate and phosphoenolpyruvate: step 4/7. The protein operates within aromatic compound metabolism; 3,4-dihydroxybenzoate biosynthesis; 3-dehydroquinate from D-quinate (NAD(+) route). Involved in the biosynthesis of the chorismate, which leads to the biosynthesis of aromatic amino acids, and plays a key role in the quinate degradation pathway. Catalyzes the NAD(+)-dependent oxidation of both quinate and shikimate to 3-dehydroquinate and 3-dehydroshikimate, respectively. It can only use NAD. This Corynebacterium glutamicum (strain ATCC 13032 / DSM 20300 / JCM 1318 / BCRC 11384 / CCUG 27702 / LMG 3730 / NBRC 12168 / NCIMB 10025 / NRRL B-2784 / 534) protein is Quinate/shikimate dehydrogenase (NAD(+)).